A 477-amino-acid polypeptide reads, in one-letter code: Ribulose bisphosphate carboxylase large chain (477 aa).

Residues 1–2 constitute a propeptide that is removed on maturation; it reads MS. Position 3 is an N-acetylproline (P3). 2 residues coordinate substrate: N123 and T173. K175 (proton acceptor) is an active-site residue. K177 is a substrate binding site. Residues K201, D203, and E204 each contribute to the Mg(2+) site. N6-carboxylysine is present on K201. The Proton acceptor role is filled by H294. Substrate is bound by residues R295, H327, and S379.

It belongs to the RuBisCO large chain family. Type I subfamily. In terms of assembly, heterohexadecamer of 8 large chains and 8 small chains; disulfide-linked. The disulfide link is formed within the large subunit homodimers. Requires Mg(2+) as cofactor. Post-translationally, the disulfide bond which can form in the large chain dimeric partners within the hexadecamer appears to be associated with oxidative stress and protein turnover.

It is found in the plastid. Its subcellular location is the chloroplast. The enzyme catalyses 2 (2R)-3-phosphoglycerate + 2 H(+) = D-ribulose 1,5-bisphosphate + CO2 + H2O. The catalysed reaction is D-ribulose 1,5-bisphosphate + O2 = 2-phosphoglycolate + (2R)-3-phosphoglycerate + 2 H(+). Functionally, ruBisCO catalyzes two reactions: the carboxylation of D-ribulose 1,5-bisphosphate, the primary event in carbon dioxide fixation, as well as the oxidative fragmentation of the pentose substrate in the photorespiration process. Both reactions occur simultaneously and in competition at the same active site. This chain is Ribulose bisphosphate carboxylase large chain, found in Lolium perenne (Perennial ryegrass).